Consider the following 443-residue polypeptide: Sensor histidine protein kinase HK06 (443 aa).

The next 2 membrane-spanning stretches (helical) occupy residues 16 to 36 (FAIL…TFPF) and 140 to 160 (ILLL…FVFS). Residues 165-217 (KRLLNPLFYISEVTSKMQDLDDNIRFDESRKDEVGEVGKQINGMYEHLLKVIH) enclose the HAMP domain. Residues 239 to 443 (GASHELKTPL…EHGMEFKISL (205 aa)) enclose the Histidine kinase domain. Residue His242 is modified to Phosphohistidine; by autocatalysis.

It localises to the cell membrane. The enzyme catalyses ATP + protein L-histidine = ADP + protein N-phospho-L-histidine.. Functionally, member of the two-component regulatory system HK06/RR06 involved in regulation of target genes, including choline-binding protein CbpA. Has been shown in one study to not be required for regulation of expression of choline-binding protein CbpA. In Streptococcus pneumoniae serotype 2 (strain D39 / NCTC 7466), this protein is Sensor histidine protein kinase HK06.